Reading from the N-terminus, the 2240-residue chain is Death-inducer obliterator 1 (2240 aa).

Methionine 1 bears the N-acetylmethionine mark. Over residues 1-25 (MDDKGDPSNEEAPKAIKPTSKEFRK) the composition is skewed to basic and acidic residues. The disordered stretch occupies residues 1-259 (MDDKGDPSNE…EPGDLGRPKP (259 aa)). Phosphoserine occurs at positions 60 and 114. A compositionally biased stretch (polar residues) spans 111 to 130 (SEGSVESASETRSGPQSAST). Over residues 132–146 (VKERPASSEKVKGGD) the composition is skewed to basic and acidic residues. Residues 147 to 156 (DHDDTSDSDS) are compositionally biased toward acidic residues. Threonine 151 carries the post-translational modification Phosphothreonine. 2 positions are modified to phosphoserine: serine 152 and serine 154. 2 short sequence motifs (nuclear localization signal) span residues 165–173 (QNRLRRKRE) and 185–193 (QSRLRKKRR). The segment covering 172 to 181 (REQEPTERPL) has biased composition (basic and acidic residues). Positions 230 to 246 (GKDDRESKLEGKAAQDI) are enriched in basic and acidic residues. A Glycyl lysine isopeptide (Lys-Gly) (interchain with G-Cter in SUMO2) cross-link involves residue lysine 247. The segment at 268 to 322 (ALYCICRQPHNNRFMICCDRCEEWFHGDCVGISEARGRLLERNGEDYICPNCTIL) adopts a PHD-type zinc-finger fold. 9 disordered regions span residues 431 to 456 (SGKE…PKCG), 501 to 567 (STPS…RNLV), 584 to 618 (KKPP…GPAP), 773 to 826 (RPAR…EKST), 860 to 947 (VPSA…EDLS), 1013 to 1045 (LAKP…PEGD), 1206 to 1427 (GELD…VAYD), 1453 to 1472 (RRNS…TPSL), and 1517 to 2240 (SDAL…ASQA). Residues 433–451 (KEQKPKPKEKMKMKPEKPS) are compositionally biased toward basic and acidic residues. Residues 501-510 (STPSWASDHN) show a composition bias toward polar residues. Phosphoserine is present on serine 523. Basic and acidic residues predominate over residues 530–541 (STKEDRRSEEKA). 2 stretches are compositionally biased toward low complexity: residues 542 to 551 (AAMAASKKTA) and 604 to 618 (PSSG…GPAP). Residues 670-790 (IRQNIRRSLK…SRTKLHNESK (121 aa)) form the TFIIS central domain. Over residues 773-791 (RPARSVMESRTKLHNESKK) the composition is skewed to basic and acidic residues. Residues 800 to 815 (PDLEDSPPVSDSEEQQ) are compositionally biased toward acidic residues. Phosphoserine occurs at positions 805 and 809. Over residues 878–890 (VKKEDLKSKHDSS) the composition is skewed to basic and acidic residues. Lysine 879 participates in a covalent cross-link: Glycyl lysine isopeptide (Lys-Gly) (interchain with G-Cter in SUMO2). 2 positions are modified to phosphoserine: serine 889 and serine 898. Over residues 930-941 (PGPPGDGHPEPS) the composition is skewed to pro residues. Residues serine 1019, serine 1030, and serine 1040 each carry the phosphoserine modification. The segment covering 1207–1220 (ELDKMDEKRTRLQP) has biased composition (basic and acidic residues). Position 1244 is a phosphotyrosine (tyrosine 1244). Threonine 1256 carries the post-translational modification Phosphothreonine. The segment covering 1258-1271 (PGSPPPPPPLPEPP) has biased composition (pro residues). Serine 1260 and serine 1312 each carry phosphoserine. Residues 1276 to 1313 (LSSLKPAAPSPATAATTAAAASTAASSTASSASKTASP) show a composition bias toward low complexity. Residues 1376-1392 (LEEEEDDRPYDPEEEYD) are compositionally biased toward acidic residues. A compositionally biased stretch (basic and acidic residues) spans 1393–1424 (PERAFDTQLVERGRRHEVERAPEAAAAEREEV). Serine 1456 is modified (phosphoserine). At threonine 1469 the chain carries Phosphothreonine. A phosphoserine mark is found at serine 1522 and serine 1714. Positions 1771–1782 (FPGPRGPAPPFP) are enriched in pro residues. Arginine 1835 carries the omega-N-methylarginine modification. Residues 1842 to 1856 (FEERKDPHGEKREFQ) show a composition bias toward basic and acidic residues. An asymmetric dimethylarginine mark is found at arginine 1893, arginine 1894, arginine 1977, arginine 1982, arginine 1993, arginine 2008, and arginine 2024. Residues 2044-2059 (AGPPSALSSSAPGQGP) are compositionally biased toward low complexity. Composition is skewed to basic and acidic residues over residues 2069 to 2101 (DFRE…KPLE) and 2109 to 2230 (ASED…EASR).

As to quaternary structure, interacts specifically (via PHD-type zinc finger) with histone H3 that is trimethylated at 'Lys-4' (H3K4me3), histone phosphorylation at 'Thr-3' or 'Thr-6' disrupts this binding and promotes translocation of DIDO1 from chromatin to the mitotic spindle during mitosis. In terms of tissue distribution, ubiquitous.

It is found in the cytoplasm. The protein resides in the nucleus. The protein localises to the cytoskeleton. It localises to the spindle. Its function is as follows. Putative transcription factor, weakly pro-apoptotic when overexpressed. Tumor suppressor. Required for early embryonic stem cell development. Functionally, displaces isoform 4 at the onset of differentiation, required for repression of stemness genes. This chain is Death-inducer obliterator 1 (DIDO1), found in Homo sapiens (Human).